Here is a 151-residue protein sequence, read N- to C-terminus: Large ribosomal subunit protein uL13 (151 aa).

The protein belongs to the universal ribosomal protein uL13 family. As to quaternary structure, part of the 50S ribosomal subunit.

Functionally, this protein is one of the early assembly proteins of the 50S ribosomal subunit, although it is not seen to bind rRNA by itself. It is important during the early stages of 50S assembly. This Acaryochloris marina (strain MBIC 11017) protein is Large ribosomal subunit protein uL13.